A 157-amino-acid chain; its full sequence is uncharacterized protein (157 aa).

Disordered stretches follow at residues 76 to 105 and 132 to 157; these read AINQ…GPRG and VRAP…RMRG. Residues 135–148 are compositionally biased toward low complexity; sequence PSTKPSKTSSSNNP.

The protein to M.pneumoniae MPN_091 and MPN_413.

This is an uncharacterized protein from Mycoplasma pneumoniae (strain ATCC 29342 / M129 / Subtype 1) (Mycoplasmoides pneumoniae).